Here is a 373-residue protein sequence, read N- to C-terminus: MPRTRNIGALCTLPEDTTHSGRPRRGVQRSYISRMAEPAPANMNDPLLLPLRMNTPGLSLVQILLGYMSWLTYLACFLRTQTQQVFLNTCRCKLFCQKVMEKMGLLVLCVFGFWMFSMHLPSKVEVWQDDSINGPLQSLRMYQEKVRHHTGEIQDLRGSMNQLIAKLQKMEAISDEQKMAQKIMKMIQGDYIEKPDFALKSIGASIDFEHTSATYNHDKARSYWNWIRLWNYAQPPDVILEPNVTPGNCWAFASDRGQVTIRLAQKVYLSNITLQHIPKTISLSGSPDTAPKDIVIYGLESLPREEVFLGAFQFQPENVIQMFQLQNLPPRSFAAVKVKISSNWGNPRFTCMYRVRVHGSVTPPKDSHLEPLS.

Residues 1–103 (MPRTRNIGAL…LFCQKVMEKM (103 aa)) lie on the Nuclear side of the membrane. A helical membrane pass occupies residues 104–120 (GLLVLCVFGFWMFSMHL). At 121 to 373 (PSKVEVWQDD…PKDSHLEPLS (253 aa)) the chain is on the perinuclear space side. The stretch at 136–180 (LQSLRMYQEKVRHHTGEIQDLRGSMNQLIAKLQKMEAISDEQKMA) forms a coiled coil. The SUN domain maps to 204–362 (ASIDFEHTSA…YRVRVHGSVT (159 aa)).

In terms of assembly, probable homotrimer. Interacts with DNAJB13. Post-translationally, highly glycosylated in the Golgi apparatus during spermiogenesis. In terms of tissue distribution, testis-specific, abundantly expressed in spermatocytes and round spermatids.

The protein resides in the nucleus inner membrane. Its subcellular location is the golgi apparatus. Its function is as follows. Plays an essential role in anchoring sperm head to the tail. Is responsible for the attachment of the coupling apparatus to the sperm nuclear envelope. The protein is SUN domain-containing protein 5 (Sun5) of Mus musculus (Mouse).